We begin with the raw amino-acid sequence, 238 residues long: Uridylate kinase (238 aa).

12-15 contributes to the ATP binding site; the sequence is KLSG. A UMP-binding site is contributed by glycine 54. ATP is bound by residues glycine 55 and arginine 59. UMP-binding positions include aspartate 74 and 135-142; that span reads TGNPYFTT. ATP contacts are provided by threonine 162, tyrosine 168, and aspartate 171.

This sequence belongs to the UMP kinase family. As to quaternary structure, homohexamer.

The protein resides in the cytoplasm. It carries out the reaction UMP + ATP = UDP + ADP. It participates in pyrimidine metabolism; CTP biosynthesis via de novo pathway; UDP from UMP (UMPK route): step 1/1. Inhibited by UTP. Its function is as follows. Catalyzes the reversible phosphorylation of UMP to UDP. The sequence is that of Uridylate kinase from Lawsonia intracellularis (strain PHE/MN1-00).